The chain runs to 217 residues: MNLVLMGLPGAGKGTQAEKIVAAYGIPHISTGDMFRAAMKEGTPLGLQAKQYMDRGDLVPDEVTIGIVRERLSKDDCQNGFLLDGFPRTVAQAEALETMLADIGRKLDYVIHIDVRQDVLMERLTGRRICRNCGATYHLIFHPPAKPGVCDKCGGELYQRADDNEATVANRLEVNMKQMKPLVDFYEQKGYLRNINGEQDMEKVFADIRELLGGLAR.

10-15 (GAGKGT) contributes to the ATP binding site. The tract at residues 30–59 (STGDMFRAAMKEGTPLGLQAKQYMDRGDLV) is NMP. Residues threonine 31, arginine 36, 57 to 59 (DLV), 85 to 88 (GFPR), and glutamine 92 contribute to the AMP site. Residues 126 to 163 (GRRICRNCGATYHLIFHPPAKPGVCDKCGGELYQRADD) form an LID region. Residue arginine 127 participates in ATP binding. Zn(2+)-binding residues include cysteine 130 and cysteine 133. Position 136-137 (136-137 (TY)) interacts with ATP. Cysteine 150 and cysteine 153 together coordinate Zn(2+). Residues arginine 160 and arginine 171 each contribute to the AMP site. Glutamine 199 is a binding site for ATP.

The protein belongs to the adenylate kinase family. As to quaternary structure, monomer.

The protein resides in the cytoplasm. The enzyme catalyses AMP + ATP = 2 ADP. It participates in purine metabolism; AMP biosynthesis via salvage pathway; AMP from ADP: step 1/1. Catalyzes the reversible transfer of the terminal phosphate group between ATP and AMP. Plays an important role in cellular energy homeostasis and in adenine nucleotide metabolism. This Geobacillus stearothermophilus (Bacillus stearothermophilus) protein is Adenylate kinase.